The primary structure comprises 693 residues: Polyribonucleotide nucleotidyltransferase (693 aa).

The Mg(2+) site is built by aspartate 489 and aspartate 495. The KH domain maps to 556–615; the sequence is PQIHVMNINPAKIKDVVGRGGATVKGIVEKTGAQIDTSDSGEVKVFAKDKKSMDMAVAMI. Residues 625–693 form the S1 motif domain; sequence GQVYKGKIVK…GRVKLSLVAR (69 aa).

Belongs to the polyribonucleotide nucleotidyltransferase family. In terms of assembly, component of the RNA degradosome, which is a multiprotein complex involved in RNA processing and mRNA degradation. Mg(2+) is required as a cofactor.

It is found in the cytoplasm. The catalysed reaction is RNA(n+1) + phosphate = RNA(n) + a ribonucleoside 5'-diphosphate. Its function is as follows. Involved in mRNA degradation. Catalyzes the phosphorolysis of single-stranded polyribonucleotides processively in the 3'- to 5'-direction. This chain is Polyribonucleotide nucleotidyltransferase, found in Francisella tularensis subsp. mediasiatica (strain FSC147).